The chain runs to 260 residues: Thiazole synthase (260 aa).

K96 (schiff-base intermediate with DXP) is an active-site residue. 1-deoxy-D-xylulose 5-phosphate-binding positions include G157, 184–185, and 206–207; these read AG and NT.

This sequence belongs to the ThiG family. Homotetramer. Forms heterodimers with either ThiH or ThiS.

It is found in the cytoplasm. The catalysed reaction is [ThiS sulfur-carrier protein]-C-terminal-Gly-aminoethanethioate + 2-iminoacetate + 1-deoxy-D-xylulose 5-phosphate = [ThiS sulfur-carrier protein]-C-terminal Gly-Gly + 2-[(2R,5Z)-2-carboxy-4-methylthiazol-5(2H)-ylidene]ethyl phosphate + 2 H2O + H(+). Its pathway is cofactor biosynthesis; thiamine diphosphate biosynthesis. In terms of biological role, catalyzes the rearrangement of 1-deoxy-D-xylulose 5-phosphate (DXP) to produce the thiazole phosphate moiety of thiamine. Sulfur is provided by the thiocarboxylate moiety of the carrier protein ThiS. In vitro, sulfur can be provided by H(2)S. The protein is Thiazole synthase of Rhodopseudomonas palustris (strain HaA2).